We begin with the raw amino-acid sequence, 81 residues long: uncharacterized protein (81 aa).

An N-terminal signal peptide occupies residues 1–22; sequence MNKKLSIIFLIFALIASVLCSA. The tract at residues 29–81 is disordered; sequence HSSSTTTTTSSSGGTSGTDSSINTGSSYSGSGSGSGSTGGSGSGSGSGTAKWK. Low complexity predominate over residues 30 to 58; it reads SSSTTTTTSSSGGTSGTDSSINTGSSYSG. Positions 59–75 are enriched in gly residues; sequence SGSGSGSTGGSGSGSGS.

Its subcellular location is the secreted. This is an uncharacterized protein from Dictyostelium discoideum (Social amoeba).